Here is a 399-residue protein sequence, read N- to C-terminus: Elongation factor Tu (399 aa).

The 195-residue stretch at 10 to 204 (KPHVNIGTIG…AVDASIPEPE (195 aa)) folds into the tr-type G domain. Residues 19 to 26 (GHVDHGKT) form a G1 region. Position 19–26 (19–26 (GHVDHGKT)) interacts with GTP. Residue T26 coordinates Mg(2+). The segment at 60–64 (GITIN) is G2. Residues 81–84 (DCPG) form a G3 region. GTP is bound by residues 81-85 (DCPGH) and 136-139 (NKCD). Positions 136–139 (NKCD) are G4. The segment at 174–176 (SGL) is G5.

Belongs to the TRAFAC class translation factor GTPase superfamily. Classic translation factor GTPase family. EF-Tu/EF-1A subfamily. Monomer.

It localises to the cytoplasm. It catalyses the reaction GTP + H2O = GDP + phosphate + H(+). In terms of biological role, GTP hydrolase that promotes the GTP-dependent binding of aminoacyl-tRNA to the A-site of ribosomes during protein biosynthesis. This chain is Elongation factor Tu, found in Prochlorococcus marinus (strain AS9601).